The chain runs to 349 residues: 3-dehydroquinate synthase (349 aa).

Residues 63 to 68 (DGEDYK), 97 to 101 (GVIGD), 121 to 122 (TT), K134, K143, and 161 to 164 (FLQT) contribute to the NAD(+) site. Positions 176, 235, and 252 each coordinate Zn(2+).

The protein belongs to the sugar phosphate cyclases superfamily. Dehydroquinate synthase family. The cofactor is Co(2+). Requires Zn(2+) as cofactor. NAD(+) serves as cofactor.

It localises to the cytoplasm. The enzyme catalyses 7-phospho-2-dehydro-3-deoxy-D-arabino-heptonate = 3-dehydroquinate + phosphate. It participates in metabolic intermediate biosynthesis; chorismate biosynthesis; chorismate from D-erythrose 4-phosphate and phosphoenolpyruvate: step 2/7. Functionally, catalyzes the conversion of 3-deoxy-D-arabino-heptulosonate 7-phosphate (DAHP) to dehydroquinate (DHQ). In Nitratiruptor sp. (strain SB155-2), this protein is 3-dehydroquinate synthase.